A 537-amino-acid polypeptide reads, in one-letter code: 2-succinyl-5-enolpyruvyl-6-hydroxy-3-cyclohexene-1-carboxylate synthase (537 aa).

It belongs to the TPP enzyme family. MenD subfamily. In terms of assembly, homodimer. The cofactor is Mg(2+). It depends on Mn(2+) as a cofactor. Requires thiamine diphosphate as cofactor.

The catalysed reaction is isochorismate + 2-oxoglutarate + H(+) = 5-enolpyruvoyl-6-hydroxy-2-succinyl-cyclohex-3-ene-1-carboxylate + CO2. It participates in quinol/quinone metabolism; 1,4-dihydroxy-2-naphthoate biosynthesis; 1,4-dihydroxy-2-naphthoate from chorismate: step 2/7. It functions in the pathway quinol/quinone metabolism; menaquinone biosynthesis. In terms of biological role, catalyzes the thiamine diphosphate-dependent decarboxylation of 2-oxoglutarate and the subsequent addition of the resulting succinic semialdehyde-thiamine pyrophosphate anion to isochorismate to yield 2-succinyl-5-enolpyruvyl-6-hydroxy-3-cyclohexene-1-carboxylate (SEPHCHC). In Dechloromonas aromatica (strain RCB), this protein is 2-succinyl-5-enolpyruvyl-6-hydroxy-3-cyclohexene-1-carboxylate synthase.